Consider the following 1159-residue polypeptide: Protocadherin-17 (1159 aa).

The first 17 residues, 1 to 17, serve as a signal peptide directing secretion; the sequence is MYLSICCCFLLWAPALT. 6 consecutive Cadherin domains span residues 18 to 132, 133 to 243, 244 to 351, 353 to 472, 473 to 583, and 589 to 695; these read LKNL…APSF, SSDQ…SPVF, EAPS…APSI, FVSV…PPRF, TKGL…APVI, and QNDT…VPRV. Topologically, residues 18–707 are extracellular; the sequence is LKNLNYSVPE…EQHHWDMSLP (690 aa). A glycan (N-linked (GlcNAc...) asparagine) is linked at Asn-22. Residues 186-188 carry the Cell attachment site motif; it reads RGD. Asn-266, Asn-439, Asn-453, Asn-504, Asn-566, and Asn-590 each carry an N-linked (GlcNAc...) asparagine glycan. A helical membrane pass occupies residues 708–728; it reads LIVTLSTISIILLAAMITIAV. Topologically, residues 729–1159 are cytoplasmic; that stretch reads KCKRENKEIR…RGNDPVAVRK (431 aa). 2 disordered regions span residues 858–909 and 1108–1132; these read NFPA…KGSC and SRDS…GRES. Residues 867 to 879 are compositionally biased toward polar residues; that stretch reads GSRQQFVQSSSTF. Composition is skewed to basic and acidic residues over residues 880 to 895 and 1120 to 1132; these read KDPE…HGDS and QLDH…GRES.

The protein resides in the cell membrane. Its function is as follows. Potential calcium-dependent cell-adhesion protein. This Homo sapiens (Human) protein is Protocadherin-17 (PCDH17).